Consider the following 864-residue polypeptide: Leucine--tRNA ligase (864 aa).

A 'HIGH' region motif is present at residues 42–52; that stretch reads PYPSGKLHMGH. Positions 624 to 628 match the 'KMSKS' region motif; that stretch reads KMSKS. Position 627 (K627) interacts with ATP.

The protein belongs to the class-I aminoacyl-tRNA synthetase family.

The protein localises to the cytoplasm. It carries out the reaction tRNA(Leu) + L-leucine + ATP = L-leucyl-tRNA(Leu) + AMP + diphosphate. The polypeptide is Leucine--tRNA ligase (Burkholderia lata (strain ATCC 17760 / DSM 23089 / LMG 22485 / NCIMB 9086 / R18194 / 383)).